The primary structure comprises 277 residues: Elongation factor Ts (277 aa).

The tract at residues 81 to 84 (TDFV) is involved in Mg(2+) ion dislocation from EF-Tu.

Belongs to the EF-Ts family.

The protein localises to the cytoplasm. Its function is as follows. Associates with the EF-Tu.GDP complex and induces the exchange of GDP to GTP. It remains bound to the aminoacyl-tRNA.EF-Tu.GTP complex up to the GTP hydrolysis stage on the ribosome. This chain is Elongation factor Ts, found in Amoebophilus asiaticus (strain 5a2).